The chain runs to 1294 residues: Disease resistance protein L6 (1294 aa).

An N-terminal signal peptide occupies residues 1–29 (MSYLREVATAVALLLPFILLNKFWRPNSK). A disordered region spans residues 34-54 (NDDDDSTSEVDAISDSTNPSG). The TIR domain maps to 59-221 (VEYEVFLSFR…AIADKVSADI (163 aa)). Residues 68–73 (RGPDTR) and Gly101 each bind NAD(+). Residue Glu135 is part of the active site. An NB-ARC domain is found at 241-480 (DDHITAVLEK…VYDRLKISYD (240 aa)). 11 LRR repeats span residues 246–268 (AVLE…GMGG), 468–492 (LDEV…IFLD), 604–625 (LSEL…NNLL), 626–650 (PNLK…NYTM), 904–928 (LENL…GLQG), 1012–1039 (FPML…SLEE), 1063–1085 (LQKL…LEEL), 1086–1109 (KSLQ…KLKE), 1179–1203 (LEEL…SFLS), 1205–1229 (LQKL…ELKS), and 1254–1278 (LKNL…ALKT).

This sequence belongs to the disease resistance TIR-NB-LRR family. Homooligomer; homooligomerization is required for activity.

The enzyme catalyses NAD(+) + H2O = ADP-D-ribose + nicotinamide + H(+). It catalyses the reaction NADP(+) + H2O = ADP-D-ribose 2'-phosphate + nicotinamide + H(+). It carries out the reaction NAD(+) = 2'cADPR + nicotinamide + H(+). Its function is as follows. TIR-NB-LRR receptor-like protein that confers resistance to the flax rust phytopathogenic fungus (M.lini). An NAD(+) hydrolase (NADase): in response to activation, catalyzes cleavage of NAD(+) into ADP-D-ribose (ADPR) and nicotinamide; NAD(+) cleavage triggering a defense system that promotes cell death. Also able to hydrolyze NADP(+), but not other NAD(+)-related molecules. Makes small amounts of 2' cyclic ADPR (2'cADPR). The chain is Disease resistance protein L6 from Linum usitatissimum (Flax).